The chain runs to 980 residues: Valine--tRNA ligase (980 aa).

Residues 1 to 40 (MADKGCEAAQSKDSSAPGSGEPRPKTEKELERERQKAAKL) form a disordered region. The span at 22–40 (PRPKTEKELERERQKAAKL) shows a compositional bias: basic and acidic residues. The short motif at 139–149 (PNVTGALHIGH) is the 'HIGH' region element. Positions 652–656 (KMSKS) match the 'KMSKS' region motif. Lys655 lines the ATP pocket.

Belongs to the class-I aminoacyl-tRNA synthetase family.

It is found in the cytoplasm. It carries out the reaction tRNA(Val) + L-valine + ATP = L-valyl-tRNA(Val) + AMP + diphosphate. This Schizosaccharomyces pombe (strain 972 / ATCC 24843) (Fission yeast) protein is Valine--tRNA ligase (vas2).